A 167-amino-acid chain; its full sequence is Mitochondrial inner membrane protease subunit 1 (167 aa).

Residues Ser40 and Lys83 contribute to the active site.

The protein belongs to the peptidase S26 family. IMP1 subfamily. As to quaternary structure, heterodimer of 2 subunits, IMMPL1 and IMMPL2.

It localises to the mitochondrion inner membrane. Functionally, catalyzes the removal of transit peptides required for the targeting of proteins from the mitochondrial matrix, across the inner membrane, into the inter-membrane space. The chain is Mitochondrial inner membrane protease subunit 1 (immp1l) from Xenopus tropicalis (Western clawed frog).